We begin with the raw amino-acid sequence, 150 residues long: Large ribosomal subunit protein uL11 (150 aa).

This sequence belongs to the universal ribosomal protein uL11 family. As to quaternary structure, part of the ribosomal stalk of the 50S ribosomal subunit. Interacts with L10 and the large rRNA to form the base of the stalk. L10 forms an elongated spine to which L12 dimers bind in a sequential fashion forming a multimeric L10(L12)X complex. Post-translationally, one or more lysine residues are methylated.

In terms of biological role, forms part of the ribosomal stalk which helps the ribosome interact with GTP-bound translation factors. This is Large ribosomal subunit protein uL11 from Jannaschia sp. (strain CCS1).